The sequence spans 133 residues: Nickel-responsive regulator (133 aa).

Positions 76, 87, 89, and 95 each coordinate Ni(2+).

The protein belongs to the transcriptional regulatory CopG/NikR family. In terms of assembly, homotetramer. Ni(2+) serves as cofactor.

In terms of biological role, transcriptional repressor of the nikABCDE operon. Is active in the presence of excessive concentrations of intracellular nickel. This chain is Nickel-responsive regulator, found in Salmonella choleraesuis (strain SC-B67).